The sequence spans 1584 residues: Kinesin-like protein unc-104 (1584 aa).

Residues 3–347 (SVKVAVRVRP…LRYADRAKQI (345 aa)) form the Kinesin motor domain. An ATP-binding site is contributed by 93 to 100 (GQTGSGKS). The segment at 183 to 335 (VCSYHDICNL…PADINFDETL (153 aa)) is microtubule-binding. 3 coiled-coil regions span residues 425–445 (EQKLIHTEEIRKQREEELRDM), 598–652 (IDLK…SYIS), and 777–797 (SIEKLKQRLEAMRDMYETDAE). The tract at residues 1366-1416 (IPMNKDPPTGNKAQELSDESGSNSITSPVSDKSLIKSSRSSDLLCRQKSKS) is disordered. Residues 1376–1394 (NKAQELSDESGSNSITSPV) are compositionally biased toward polar residues. The span at 1395–1409 (SDKSLIKSSRSSDLL) shows a compositional bias: low complexity. In terms of domain architecture, PH spans 1460–1558 (VVSKKGYMNF…WLYAINPLMA (99 aa)).

Belongs to the TRAFAC class myosin-kinesin ATPase superfamily. Kinesin family. Unc-104 subfamily. In terms of assembly, interacts with casy-1. In terms of tissue distribution, expressed in nerve ring, amphid commissure and ventral nerve cord (at protein level).

Its subcellular location is the cytoplasm. It localises to the cytoskeleton. It is found in the cell projection. The protein localises to the axon. In terms of biological role, motor protein involved in microtubule-associated anterograde transport. Regulates the transport of synaptic vesicle precursors in the axon of DA motor neurons. Regulates the polarized sorting of axonal proteins. Essential for the transport of synaptic components during the synaptic remodeling of the DD motor neuron, probably downstream of cdk-5 and/or pct-1/cyy-1 complex. Required for the anterograde transport of neuropeptide-containing dense core vesicles along axons. Involved in necrotic cell death. The protein is Kinesin-like protein unc-104 (unc-104) of Caenorhabditis elegans.